A 324-amino-acid chain; its full sequence is tRNA pseudouridine synthase B (324 aa).

Asp-49 acts as the Nucleophile in catalysis.

It belongs to the pseudouridine synthase TruB family. Type 1 subfamily.

It carries out the reaction uridine(55) in tRNA = pseudouridine(55) in tRNA. Functionally, responsible for synthesis of pseudouridine from uracil-55 in the psi GC loop of transfer RNAs. The polypeptide is tRNA pseudouridine synthase B (Tolumonas auensis (strain DSM 9187 / NBRC 110442 / TA 4)).